Here is a 623-residue protein sequence, read N- to C-terminus: Calnexin (623 aa).

An N-terminal signal peptide occupies residues 1–21 (MLNRKWSFVFLTFLLVISVNA). D108 is a Ca(2+) binding site. A disulfide bridge connects residues C151 and C185. Residues Y155, K157, Y176, and D183 each contribute to the an alpha-D-glucoside site. N-linked (GlcNAc...) asparagine glycosylation occurs at N202. Residues 260–337 (SLTPPKEIFD…QKPQDWDEDM (78 aa)) form a disordered region. Residues 266-276 (EIFDETDLKPE) are compositionally biased toward basic and acidic residues. Positions 267–400 (IFDETDLKPE…RLIDNPNYFE (134 aa)) are p domain (Extended arm). 5 tandem repeats follow at residues 269 to 281 (DETD…WDER), 286 to 298 (DETA…WDEN), 305 to 317 (DESA…WNEE), 324 to 336 (DPEA…WDED), and 339 to 349 (GSWEAPLIDNP). 4 X approximate repeats stretches follow at residues 269–336 (DETD…WDED) and 339–396 (GSWE…IDNP). Acidic residues-rich tracts occupy residues 277–287 (DWDEREQIEDE) and 314–323 (WNEEENELIP). Cysteines 351 and 357 form a disulfide. 3 repeat units span residues 358–368 (GTWKPPTIKNP), 372–382 (GKWVRPKIANP), and 386–396 (GKWSPRLIDNP). E416 serves as a coordination point for an alpha-D-glucoside. Position 427 (D427) interacts with Ca(2+). A helical transmembrane segment spans residues 480 to 500 (LWAVYILCILLPLIAIGVFCF). The segment at 536–623 (IAEDEEDNQP…AKRRTARRGD (88 aa)) is disordered. Residues 556-565 (IDEDEQDEVE) show a composition bias toward acidic residues. Residues 566–581 (QQPSSSKTASSESSSA) are compositionally biased toward low complexity. Positions 614 to 623 (AKRRTARRGD) are enriched in basic residues.

The protein belongs to the calreticulin family. Glycosylation is important for its biological activity.

The protein localises to the endoplasmic reticulum membrane. It is found in the cytoplasm. It localises to the perinuclear region. The protein resides in the cytoplasmic vesicle. In terms of biological role, calcium-binding protein that interacts with newly synthesized monoglucosylated glycoproteins in the endoplasmic reticulum. It may act in assisting protein assembly and/or in the retention within the ER of unassembled protein subunits. It seems to play a major role in the quality control apparatus of the ER by the retention of incorrectly folded proteins. Required for embryogenesis and larval development under heat and ER stress conditions. May be important for germ cell development. Involved in neuronal necrotic cell death. This is Calnexin from Caenorhabditis briggsae.